The sequence spans 337 residues: Peroxisome biogenesis factor 10 (337 aa).

Residues 1 to 24 (MKNDNKLQKEALMRLSQLRFPFAD) are Peroxisomal matrix-facing. Residues 25-54 (APSIVQAHQKDEQIQGLLIMKVTELCKLIK) traverse the membrane as a helical segment. Ser-55 is a topological domain (cytoplasmic). Residues 56 to 77 (QLFVNSYPKELSIFAKLLYLLF) form a helical membrane-spanning segment. At 78–105 (TTGRRGRTLGEEYVDLTYTNRKGTRLAG) the chain is on the peroxisomal matrix side. Residues 106–138 (RLKMIVFAFAYPLCPYFITKLYKKIMKNNKESK) traverse the membrane as a helical segment. The Cytoplasmic portion of the chain corresponds to 139–145 (IEDTESV). Residues 146-166 (AAFCKGLLDFILDVHMTLFYF) form a helical membrane-spanning segment. The Peroxisomal matrix portion of the chain corresponds to 167-202 (KGAFYSISKRIFGMRYVFKHILSKNEANFREEGSQK). The chain crosses the membrane as a helical span at residues 203-222 (YKVLGYILLAQNVMKWYPVL). Over 223 to 337 (TSTLGSWIYG…QPQEILVLRQ (115 aa)) the chain is Cytoplasmic. Residues Cys-286, Cys-289, Cys-301, His-303, Cys-306, Cys-309, Cys-320, and Cys-323 each coordinate Zn(2+). The RING-type zinc-finger motif lies at 286 to 327 (CILCLMNMSDPSCAPCGHLFCWSCLMSWCKERPECPLCRQHC).

Belongs to the pex2/pex10/pex12 family. In terms of assembly, component of the PEX2-PEX10-PEX12 retrotranslocation channel, composed of PEX2, PEX10 and PEX12.

The protein resides in the peroxisome membrane. It carries out the reaction S-ubiquitinyl-[E2 ubiquitin-conjugating enzyme]-L-cysteine + [acceptor protein]-L-lysine = [E2 ubiquitin-conjugating enzyme]-L-cysteine + N(6)-ubiquitinyl-[acceptor protein]-L-lysine.. Its pathway is protein modification; protein ubiquitination. Its activity is regulated as follows. The E3 ubiquitin-protein ligase activity is stimulated by PEX12. Its function is as follows. E3 ubiquitin-protein ligase component of a retrotranslocation channel required for peroxisome organization by mediating export of the PEX5 receptor from peroxisomes to the cytosol, thereby promoting PEX5 recycling. The retrotranslocation channel is composed of PEX2, PEX10 and PEX12; each subunit contributing transmembrane segments that coassemble into an open channel that specifically allows the passage of PEX5 through the peroxisomal membrane. PEX10 also regulates PEX5 recycling by acting as a E3 ubiquitin-protein ligase. When PEX5 recycling is compromised, PEX10 catalyzes polyubiquitination of PEX5 during its passage through the retrotranslocation channel, leading to its degradation. This chain is Peroxisome biogenesis factor 10, found in Saccharomyces cerevisiae (strain ATCC 204508 / S288c) (Baker's yeast).